The primary structure comprises 86 residues: Toxin Tpa6 (86 aa).

A signal peptide spans M1–A20. The LCN-type CS-alpha/beta domain occupies R22 to M85. 4 disulfides stabilise this stretch: C33/C84, C37/C58, C43/C64, and C47/C66.

The protein belongs to the long (4 C-C) scorpion toxin superfamily. Sodium channel inhibitor family. Beta subfamily. As to expression, expressed by the venom gland.

The protein localises to the secreted. Its function is as follows. Beta toxins bind voltage-independently at site-4 of sodium channels (Nav) and shift the voltage of activation toward more negative potentials thereby affecting sodium channel activation and promoting spontaneous and repetitive firing. The protein is Toxin Tpa6 of Tityus pachyurus (Colombian scorpion).